Here is a 243-residue protein sequence, read N- to C-terminus: Beta-glucanase (243 aa).

The first 27 residues, 1–27 (MSYRVKRMLMLLVTGLFLSLSTFAASA), serve as a signal peptide directing secretion. In terms of domain architecture, GH16 spans 29–243 (AQTGGSFYEP…SLHWVRYTKR (215 aa)). A disulfide bridge links Cys-61 with Cys-90. Residue Glu-134 is the Nucleophile of the active site. Glu-138 (proton donor) is an active-site residue.

It belongs to the glycosyl hydrolase 16 family.

It catalyses the reaction Hydrolysis of (1-&gt;4)-beta-D-glucosidic linkages in beta-D-glucans containing (1-&gt;3)- and (1-&gt;4)-bonds.. This Bacillus licheniformis protein is Beta-glucanase (bg1).